The sequence spans 1241 residues: Putative urea carboxylase (1241 aa).

In terms of domain architecture, Biotin carboxylation spans 3-459 (ALKTLLIANR…LTKFLNNFEY (457 aa)). ATP is bound by residues lysine 117 and glutamate 201. Residues 121 to 321 (RELATKAGVP…LVELMLRQAD (201 aa)) form the ATP-grasp domain. Positions 1159–1239 (EELLKDPEIT…EAGKPLMLVR (81 aa)) constitute a Biotinyl-binding domain. N6-biotinyllysine is present on lysine 1202.

It depends on biotin as a cofactor.

The catalysed reaction is urea + hydrogencarbonate + ATP = urea-1-carboxylate + ADP + phosphate + H(+). In terms of biological role, involved in the utilization of lactams. Required for the conversion of exogenous 2-pyrrolidinone (gamma-butyrolactam) to endogenous gamma-amino-n-butyrate (GABA). This Emericella nidulans (strain FGSC A4 / ATCC 38163 / CBS 112.46 / NRRL 194 / M139) (Aspergillus nidulans) protein is Putative urea carboxylase (lamA).